The chain runs to 365 residues: Phospho-N-acetylmuramoyl-pentapeptide-transferase (365 aa).

The next 10 membrane-spanning stretches (helical) occupy residues 22–42 (YISV…LALG), 74–94 (TMGG…WGDL), 95–115 (TSIY…IGFF), 134–154 (KFAL…YLLS), 168–188 (SLYI…IING), 201–221 (GLAI…AYIE), 240–260 (LAEV…FLWF), 267–287 (VFMG…IAVM), 292–312 (LIFF…MLQV), and 342–362 (KVVI…LAAI).

The protein belongs to the glycosyltransferase 4 family. MraY subfamily. Mg(2+) serves as cofactor.

It localises to the cell inner membrane. The catalysed reaction is UDP-N-acetyl-alpha-D-muramoyl-L-alanyl-gamma-D-glutamyl-meso-2,6-diaminopimeloyl-D-alanyl-D-alanine + di-trans,octa-cis-undecaprenyl phosphate = di-trans,octa-cis-undecaprenyl diphospho-N-acetyl-alpha-D-muramoyl-L-alanyl-D-glutamyl-meso-2,6-diaminopimeloyl-D-alanyl-D-alanine + UMP. It functions in the pathway cell wall biogenesis; peptidoglycan biosynthesis. Its function is as follows. Catalyzes the initial step of the lipid cycle reactions in the biosynthesis of the cell wall peptidoglycan: transfers peptidoglycan precursor phospho-MurNAc-pentapeptide from UDP-MurNAc-pentapeptide onto the lipid carrier undecaprenyl phosphate, yielding undecaprenyl-pyrophosphoryl-MurNAc-pentapeptide, known as lipid I. This chain is Phospho-N-acetylmuramoyl-pentapeptide-transferase, found in Francisella tularensis subsp. mediasiatica (strain FSC147).